The primary structure comprises 147 residues: MSIVQNKKAFHDYFIEEKHEAGAVLEGWEVKAIRAGRAQLKEAYVIIRNGELFLIGCHVSPLLAASTHIQPDPVRTRKLLLHAEEIKRLIGKVERAGYTLVPLDIHYKKGRIKLEIGLAKGKKQHDKRESEKQKEWERDKQRLMRPK.

A disordered region spans residues alanine 119–lysine 147. The span at aspartate 126–lysine 147 shows a compositional bias: basic and acidic residues.

This sequence belongs to the SmpB family.

It localises to the cytoplasm. Its function is as follows. Required for rescue of stalled ribosomes mediated by trans-translation. Binds to transfer-messenger RNA (tmRNA), required for stable association of tmRNA with ribosomes. tmRNA and SmpB together mimic tRNA shape, replacing the anticodon stem-loop with SmpB. tmRNA is encoded by the ssrA gene; the 2 termini fold to resemble tRNA(Ala) and it encodes a 'tag peptide', a short internal open reading frame. During trans-translation Ala-aminoacylated tmRNA acts like a tRNA, entering the A-site of stalled ribosomes, displacing the stalled mRNA. The ribosome then switches to translate the ORF on the tmRNA; the nascent peptide is terminated with the 'tag peptide' encoded by the tmRNA and targeted for degradation. The ribosome is freed to recommence translation, which seems to be the essential function of trans-translation. In Nitrosospira multiformis (strain ATCC 25196 / NCIMB 11849 / C 71), this protein is SsrA-binding protein.